A 227-amino-acid polypeptide reads, in one-letter code: Ribosomal RNA large subunit methyltransferase E (227 aa).

Gly78, Trp80, Asp103, Asp119, and Asp143 together coordinate S-adenosyl-L-methionine. Catalysis depends on Lys183, which acts as the Proton acceptor.

This sequence belongs to the class I-like SAM-binding methyltransferase superfamily. RNA methyltransferase RlmE family.

It is found in the cytoplasm. The catalysed reaction is uridine(2552) in 23S rRNA + S-adenosyl-L-methionine = 2'-O-methyluridine(2552) in 23S rRNA + S-adenosyl-L-homocysteine + H(+). Functionally, specifically methylates the uridine in position 2552 of 23S rRNA at the 2'-O position of the ribose in the fully assembled 50S ribosomal subunit. This is Ribosomal RNA large subunit methyltransferase E from Rickettsia typhi (strain ATCC VR-144 / Wilmington).